Reading from the N-terminus, the 696-residue chain is DNA-directed RNA polymerase subunit beta' (696 aa).

Cys-70, Cys-72, Cys-85, and Cys-88 together coordinate Zn(2+). Residues Asp-540, Asp-542, and Asp-544 each coordinate Mg(2+).

The protein belongs to the RNA polymerase beta' chain family. RpoC1 subfamily. In plastids the minimal PEP RNA polymerase catalytic core is composed of four subunits: alpha, beta, beta', and beta''. When a (nuclear-encoded) sigma factor is associated with the core the holoenzyme is formed, which can initiate transcription. Mg(2+) is required as a cofactor. Requires Zn(2+) as cofactor.

Its subcellular location is the plastid. It localises to the chloroplast. It carries out the reaction RNA(n) + a ribonucleoside 5'-triphosphate = RNA(n+1) + diphosphate. DNA-dependent RNA polymerase catalyzes the transcription of DNA into RNA using the four ribonucleoside triphosphates as substrates. The protein is DNA-directed RNA polymerase subunit beta' of Phaeodactylum tricornutum (strain CCAP 1055/1).